A 267-amino-acid chain; its full sequence is Protein COFACTOR ASSEMBLY OF COMPLEX C SUBUNIT B CCB1, chloroplastic (267 aa).

A chloroplast-targeting transit peptide spans 1-44 (MATKLISPPLSCPWVTSREVIIKGLPRRRREWMVTKRNRVSAVT). Residues 45–84 (AMIVEPLSVVSSSAIQIHQWWEQNPNSLLLMTEATGGYSL) lie on the Lumenal side of the membrane. A helical transmembrane segment spans residues 85–105 (ASYYTSLGLFVISVPGLWSLI). Over 106–164 (KRSVKSKIVRKTFVVNDVKKEPKQVAGEILSFFTRKNFNITDRGETITFEGKMVPSRGQ) the chain is Stromal. Residues 165–185 (AALLTFCTCISLASVGLVLTI) form a helical membrane-spanning segment. Position 186 (Thr186) is a topological domain, lumenal. The helical transmembrane segment at 187–207 (VPDFGNNWFFIILLSPLAGVY) threads the bilayer. Residues 208-267 (YWKKASRKEEIKVKMMVGSKGRLDEIVVQGDDVQVEEMRKELQLNEKGMVYVKGLFERSS) are Stromal-facing.

It localises to the plastid. The protein resides in the chloroplast thylakoid membrane. Its function is as follows. Required for the biogenesis and accumulation of native cytochrome b6 in the thylakoid membrane. Controls the conversion of apocytochrome b6 to holocytochrome b6. Required for covalent binding of the c-type heme to cytochrome b6. In Arabidopsis thaliana (Mouse-ear cress), this protein is Protein COFACTOR ASSEMBLY OF COMPLEX C SUBUNIT B CCB1, chloroplastic.